Consider the following 135-residue polypeptide: Cofilin-4 (135 aa).

The region spanning 3 to 135 (SCASINDEVI…SQSLVEERCK (133 aa)) is the ADF-H domain.

This sequence belongs to the actin-binding proteins ADF family.

The protein localises to the cytoplasm. It localises to the cytoskeleton. Controls actin polymerization and depolymerization. The polypeptide is Cofilin-4 (cofE) (Dictyostelium discoideum (Social amoeba)).